A 520-amino-acid polypeptide reads, in one-letter code: Biotinidase (520 aa).

An N-terminal signal peptide occupies residues 1-21 (MSGARTAPALFFLGCSALALG). Positions 49-333 (NPLELVSRQE…TGNTTSEMDP (285 aa)) constitute a CN hydrolase domain. Residue E89 is the Proton acceptor of the active site. 3 N-linked (GlcNAc...) asparagine glycosylation sites follow: N96, N127, and N180. The active-site Proton donor is K189. C222 acts as the Nucleophile in catalysis. N-linked (GlcNAc...) asparagine glycans are attached at residues N326, N379, and N466.

This sequence belongs to the carbon-nitrogen hydrolase superfamily. BTD/VNN family.

It is found in the secreted. It localises to the extracellular space. It carries out the reaction biocytin + H2O = biotin + L-lysine. The catalysed reaction is biotin amide + H2O = biotin + NH4(+). Catalytic release of biotin from biocytin, the product of biotin-dependent carboxylases degradation. In Mus musculus (Mouse), this protein is Biotinidase (Btd).